Here is a 323-residue protein sequence, read N- to C-terminus: Quinolinate synthase (323 aa).

The iminosuccinate site is built by His-39 and Ser-56. Cys-101 is a binding site for [4Fe-4S] cluster. Iminosuccinate contacts are provided by residues 127-129 (YIN) and Ser-144. Residue Cys-187 coordinates [4Fe-4S] cluster. Iminosuccinate is bound by residues 213-215 (HPE) and Thr-230. Cys-280 contributes to the [4Fe-4S] cluster binding site.

Belongs to the quinolinate synthase family. Type 2 subfamily. [4Fe-4S] cluster serves as cofactor.

The protein localises to the cytoplasm. It catalyses the reaction iminosuccinate + dihydroxyacetone phosphate = quinolinate + phosphate + 2 H2O + H(+). It participates in cofactor biosynthesis; NAD(+) biosynthesis; quinolinate from iminoaspartate: step 1/1. Catalyzes the condensation of iminoaspartate with dihydroxyacetone phosphate to form quinolinate. This is Quinolinate synthase from Chlorobium phaeobacteroides (strain DSM 266 / SMG 266 / 2430).